Reading from the N-terminus, the 254-residue chain is 3-dehydroquinate dehydratase (254 aa).

3-dehydroquinate contacts are provided by residues 47–49 (EFR) and Arg-83. The Proton donor/acceptor role is filled by His-144. Lys-171 (schiff-base intermediate with substrate) is an active-site residue. 3-dehydroquinate-binding residues include Arg-213, Ser-232, and Gln-236.

It belongs to the type-I 3-dehydroquinase family. Homodimer.

The enzyme catalyses 3-dehydroquinate = 3-dehydroshikimate + H2O. It functions in the pathway metabolic intermediate biosynthesis; chorismate biosynthesis; chorismate from D-erythrose 4-phosphate and phosphoenolpyruvate: step 3/7. Functionally, involved in the third step of the chorismate pathway, which leads to the biosynthesis of aromatic amino acids. Catalyzes the cis-dehydration of 3-dehydroquinate (DHQ) and introduces the first double bond of the aromatic ring to yield 3-dehydroshikimate. The chain is 3-dehydroquinate dehydratase from Neisseria meningitidis serogroup B (strain ATCC BAA-335 / MC58).